The sequence spans 186 residues: Protein GrpE (186 aa).

Over residues 1-17 the composition is skewed to basic and acidic residues; it reads MKDEHNQEHDLSQKELE. Residues 1-32 are disordered; sequence MKDEHNQEHDLSQKELESCENSCTCEGKKQEA.

This sequence belongs to the GrpE family. In terms of assembly, homodimer.

The protein resides in the cytoplasm. Participates actively in the response to hyperosmotic and heat shock by preventing the aggregation of stress-denatured proteins, in association with DnaK and GrpE. It is the nucleotide exchange factor for DnaK and may function as a thermosensor. Unfolded proteins bind initially to DnaJ; upon interaction with the DnaJ-bound protein, DnaK hydrolyzes its bound ATP, resulting in the formation of a stable complex. GrpE releases ADP from DnaK; ATP binding to DnaK triggers the release of the substrate protein, thus completing the reaction cycle. Several rounds of ATP-dependent interactions between DnaJ, DnaK and GrpE are required for fully efficient folding. This is Protein GrpE from Helicobacter acinonychis (strain Sheeba).